The following is a 140-amino-acid chain: Small ribosomal subunit protein uS19 (140 aa).

This sequence belongs to the universal ribosomal protein uS19 family.

In terms of biological role, protein S19 forms a complex with S13 that binds strongly to the 16S ribosomal RNA. The protein is Small ribosomal subunit protein uS19 (rps19) of Sulfurisphaera tokodaii (strain DSM 16993 / JCM 10545 / NBRC 100140 / 7) (Sulfolobus tokodaii).